The primary structure comprises 480 residues: 3,6-anhydro-alpha-L-galactose dehydrogenase (480 aa).

NADP(+) is bound by residues 149 to 150 (WN), 173 to 176 (KPTS), and 226 to 227 (GS). Glu-248 serves as the catalytic Proton acceptor. Leu-249 is a binding site for NADP(+). Cys-282 functions as the Nucleophile in the catalytic mechanism. NADP(+) is bound at residue Glu-383.

The protein belongs to the aldehyde dehydrogenase family.

It carries out the reaction 3,6-anhydro-alpha-L-galactopyranose + NADP(+) + H2O = 3,6-anhydro-L-galactonate + NADPH + 2 H(+). It catalyses the reaction 3,6-anhydro-alpha-L-galactopyranose + NAD(+) + H2O = 3,6-anhydro-L-galactonate + NADH + 2 H(+). In terms of biological role, involved in the degradation of 3,6-anhydro-L-galactose, which is the major monomeric sugar of red macroalgae. Catalyzes the oxidation of 3,6-anhydro-L-galactose (AHG) to form 3,6-anhydrogalactonate (AHGA). This is 3,6-anhydro-alpha-L-galactose dehydrogenase from Vibrio sp. (strain EJY3).